The chain runs to 72 residues: SRY-related protein AES2 (72 aa).

Residues 1-69 constitute a DNA-binding region (HMG box); that stretch reads VKRPMNAFMV…KHMADYPDYK (69 aa).

It is found in the nucleus. The polypeptide is SRY-related protein AES2 (Alligator mississippiensis (American alligator)).